A 1376-amino-acid polypeptide reads, in one-letter code: Phospholipid-transporting ATPase DRS2 (1376 aa).

Positions 1–10 are enriched in gly residues; sequence MAGRPTGGPQ. 2 disordered regions span residues 1 to 151 and 180 to 217; these read MAGR…AAAR and GYSE…PKRD. At 1 to 306 the chain is on the cytoplasmic side; it reads MAGRPTGGPQ…QIPGLSPTNR (306 aa). Basic and acidic residues predominate over residues 40–50; the sequence is DLMRTYTRDQE. Over residues 85-96 the composition is skewed to low complexity; that stretch reads QSSSSNNNNNNN. The span at 97-115 shows a compositional bias: polar residues; that stretch reads VSAPYSRSGRQYSQTSDLG. Residues 191-203 show a composition bias toward gly residues; it reads PGGGGGGAGGGGH. The chain crosses the membrane as a helical span at residues 307 to 327; the sequence is FTTIIPLVAVLMVSAGKELVE. Topologically, residues 328-509 are extracellular; that stretch reads DYRRKQADAA…KVEKKLNTLV (182 aa). Asn-339, Asn-433, and Asn-490 each carry an N-linked (GlcNAc...) asparagine glycan. The chain crosses the membrane as a helical span at residues 510–530; the sequence is LLLVGILMVLSIISTVGDLII. Over 531–559 the chain is Cytoplasmic; it reads RRVEGDAISYLMLDQPDTAGKIAETFFKD. Residues 560–580 traverse the membrane as a helical segment; the sequence is MVTYWVLFSSLVPISLFVTVE. At 581–1107 the chain is on the extracellular side; the sequence is MVKYWHGILI…VFSGAVIYES (527 aa). Asp-625 acts as the 4-aspartylphosphate intermediate in catalysis. ATP is bound by residues Asp-625, Lys-626, and Thr-627. Asp-625 is a Mg(2+) binding site. Mg(2+) is bound at residue Thr-627. Asn-679 carries an N-linked (GlcNAc...) asparagine glycan. Positions 720 and 761 each coordinate ATP. N-linked (GlcNAc...) asparagine glycosylation is present at Asn-762. Ser-763, Lys-766, Lys-784, Arg-817, Thr-818, Thr-898, Gly-899, Asp-900, Arg-991, and Lys-997 together coordinate ATP. Asp-1018 contacts Mg(2+). Positions 1021 and 1022 each coordinate ATP. Asp-1022 provides a ligand contact to Mg(2+). N-linked (GlcNAc...) asparagine glycosylation occurs at Asn-1083. The chain crosses the membrane as a helical span at residues 1108-1128; the sequence is WTLTFYNVFYTVLPPLALGIL. Topologically, residues 1129-1165 are cytoplasmic; the sequence is DQFISARLLDRYPQLYSMGQQNQFFRMKVFIEWLLNA. Residues 1166-1186 form a helical membrane-spanning segment; sequence VYHSIILYVFGELIWHGDLIL. The Extracellular portion of the chain corresponds to 1187–1190; sequence ENGQ. Residues 1191–1211 traverse the membrane as a helical segment; it reads IAGHWMWGTALYAPVLLTVLG. Lys-1212 serves as a coordination point for a 1,2-diacyl-sn-glycero-3-phospho-(1D-myo-inositol 4-phosphate). Residues 1212-1224 lie on the Cytoplasmic side of the membrane; the sequence is KAGLVTSNWTKYH. A helical membrane pass occupies residues 1225 to 1245; it reads VIAIPGSMAIWWIFIAVYGTV. Residues 1246–1257 lie on the Extracellular side of the membrane; sequence APMIPFSPEFHG. The chain crosses the membrane as a helical span at residues 1258 to 1278; that stretch reads IVPKLYSSPIFWLQSFALAIL. Residues 1279–1376 are Cytoplasmic-facing; sequence CLLRDFAWKY…TSSRPQGQGT (98 aa). Residues Arg-1282, Trp-1286, Lys-1287, Tyr-1298, and His-1299 each contribute to the a 1,2-diacyl-sn-glycero-3-phospho-(1D-myo-inositol 4-phosphate) site.

The protein belongs to the cation transport ATPase (P-type) (TC 3.A.3) family. Type IV subfamily. Mg(2+) is required as a cofactor.

Its subcellular location is the cell membrane. The protein resides in the golgi apparatus. It localises to the trans-Golgi network membrane. The enzyme catalyses ATP + H2O + phospholipidSide 1 = ADP + phosphate + phospholipidSide 2.. It carries out the reaction a 1,2-diacyl-sn-glycero-3-phospho-L-serine(out) + ATP + H2O = a 1,2-diacyl-sn-glycero-3-phospho-L-serine(in) + ADP + phosphate + H(+). It catalyses the reaction a 1,2-diacyl-sn-glycero-3-phosphoethanolamine(out) + ATP + H2O = a 1,2-diacyl-sn-glycero-3-phosphoethanolamine(in) + ADP + phosphate + H(+). Its function is as follows. Catalytic component of a P4-ATPase flippase complex which catalyzes the hydrolysis of ATP coupled to the transport of phosphatidylserine and small amounts of ethanolamine from the lumen to the cytosolic leaflet of the trans-Golgi network and cell membrane and ensures the maintenance of asymmetric distribution of phospholipids. Required for efficient vesicle transport during toxin secretion. This chain is Phospholipid-transporting ATPase DRS2 (DRS2), found in Verticillium dahliae (strain VdLs.17 / ATCC MYA-4575 / FGSC 10137) (Verticillium wilt).